A 333-amino-acid polypeptide reads, in one-letter code: Cathepsin M (333 aa).

Positions 1–15 are cleaved as a signal peptide; it reads MTSAIFLAMLCLGMA. A propeptide spans 16-113 (activation peptide); that stretch reads LPSPAPDPIL…KSVQKRLSVN (98 aa). Cystine bridges form between Cys-135-Cys-178 and Cys-169-Cys-211. Cys-138 is a catalytic residue. 3 N-linked (GlcNAc...) asparagine glycosylation sites follow: Asn-217, Asn-221, and Asn-268. A disulfide bond links Cys-269 and Cys-322. Catalysis depends on residues His-276 and Asn-300.

This sequence belongs to the peptidase C1 family. Placenta.

It localises to the lysosome. This is Cathepsin M (Ctsm) from Mus musculus (Mouse).